The chain runs to 215 residues: Ribose-5-phosphate isomerase A (215 aa).

Substrate contacts are provided by residues 26–29 (TGST), 79–82 (DGAD), and 92–95 (KGGG). The Proton acceptor role is filled by glutamate 101. Lysine 119 contributes to the substrate binding site.

This sequence belongs to the ribose 5-phosphate isomerase family. As to quaternary structure, homodimer.

It carries out the reaction aldehydo-D-ribose 5-phosphate = D-ribulose 5-phosphate. Its pathway is carbohydrate degradation; pentose phosphate pathway; D-ribose 5-phosphate from D-ribulose 5-phosphate (non-oxidative stage): step 1/1. In terms of biological role, catalyzes the reversible conversion of ribose-5-phosphate to ribulose 5-phosphate. This chain is Ribose-5-phosphate isomerase A, found in Stenotrophomonas maltophilia (strain R551-3).